The sequence spans 66 residues: Beta-mammal toxin Cv3 (66 aa).

The region spanning 1 to 66 (KEGYIVNYYD…VWPLPNKTCN (66 aa)) is the LCN-type CS-alpha/beta domain. 4 cysteine pairs are disulfide-bonded: C12-C65, C16-C41, C25-C46, and C29-C48.

As to expression, expressed by the venom gland.

It is found in the secreted. Beta toxins bind voltage-independently at site-4 of sodium channels (Nav) and reduces peak current and shifts the voltage of activation toward more negative potentials thereby affecting sodium channel activation and promoting spontaneous and repetitive firing. This toxin is strongly toxic to mice. The chain is Beta-mammal toxin Cv3 from Centruroides villegasi (Scorpion).